The following is a 93-amino-acid chain: Aspartyl/glutamyl-tRNA(Asn/Gln) amidotransferase subunit C (93 aa).

This sequence belongs to the GatC family. In terms of assembly, heterotrimer of A, B and C subunits.

It catalyses the reaction L-glutamyl-tRNA(Gln) + L-glutamine + ATP + H2O = L-glutaminyl-tRNA(Gln) + L-glutamate + ADP + phosphate + H(+). The enzyme catalyses L-aspartyl-tRNA(Asn) + L-glutamine + ATP + H2O = L-asparaginyl-tRNA(Asn) + L-glutamate + ADP + phosphate + 2 H(+). Its function is as follows. Allows the formation of correctly charged Asn-tRNA(Asn) or Gln-tRNA(Gln) through the transamidation of misacylated Asp-tRNA(Asn) or Glu-tRNA(Gln) in organisms which lack either or both of asparaginyl-tRNA or glutaminyl-tRNA synthetases. The reaction takes place in the presence of glutamine and ATP through an activated phospho-Asp-tRNA(Asn) or phospho-Glu-tRNA(Gln). The polypeptide is Aspartyl/glutamyl-tRNA(Asn/Gln) amidotransferase subunit C (Methanothrix thermoacetophila (strain DSM 6194 / JCM 14653 / NBRC 101360 / PT) (Methanosaeta thermophila)).